The sequence spans 387 residues: Acetylajmalan esterase (387 aa).

Positions 1–22 (MGFARLLHLVFSLLVFAGITNG) are cleaved as a signal peptide. Residue Ser36 is the Nucleophile of the active site. Residues Asn98, Asn180, Asn199, Asn249, and Asn296 are each glycosylated (N-linked (GlcNAc...) asparagine). Catalysis depends on residues Asp337 and His340.

This sequence belongs to the 'GDSL' lipolytic enzyme family.

It catalyses the reaction 17-O-acetylajmaline + H2O = ajmaline + acetate + H(+). The enzyme catalyses 17-O-acetylnorajmaline + H2O = norajmaline + acetate + H(+). It participates in alkaloid biosynthesis; ajmaline biosynthesis. In terms of biological role, acetylesterase involved in the biosynthesis of ajmaline-type monoterpenoid indole alkaloids (MIAs) natural products, important plant-derived pharmaceuticals used in the therapy of heart disorders. Deacetylates 17-O-acetylajmaline and 17-O-acetylnorajmaline to produce ajmaline and norajmaline, but is inactive toward other acetylated alkaloids. This is Acetylajmalan esterase from Rauvolfia serpentina (Serpentine wood).